A 329-amino-acid polypeptide reads, in one-letter code: Ribosomal RNA small subunit methyltransferase C (329 aa).

Belongs to the methyltransferase superfamily. RsmC family. As to quaternary structure, monomer.

Its subcellular location is the cytoplasm. The enzyme catalyses guanosine(1207) in 16S rRNA + S-adenosyl-L-methionine = N(2)-methylguanosine(1207) in 16S rRNA + S-adenosyl-L-homocysteine + H(+). Its function is as follows. Specifically methylates the guanine in position 1207 of 16S rRNA in the 30S particle. This is Ribosomal RNA small subunit methyltransferase C from Actinobacillus pleuropneumoniae serotype 7 (strain AP76).